Consider the following 424-residue polypeptide: SWI/SNF and RSC complexes subunit arp42 (424 aa).

The protein belongs to the actin family. As to quaternary structure, component of the RSC complex composed of at least arp9, arp42, rsc1, rsc4, rsc7, rsc9, rsc58, sfh1, snf21, ssr1, ssr2, ssr3 and ssr4. The complex interacts with histone and histone variant components of centromeric chromatin. Component of the SWI/SNF global transcription activator complex composed of at least arp9, arp42, snf5, snf22, snf30, sbf59, sol1, ssr1, ssr2, ssr3, ssr4 and tfg3.

The protein resides in the cytoplasm. The protein localises to the nucleus. Its function is as follows. Component of the chromatin structure remodeling complex (RSC), which is involved in transcription regulation and nucleosome positioning. Controls particularly membrane and organelle development genes. Part of the SWI/SNF complex, an ATP-dependent chromatin remodeling complex, required for the positive and negative regulation of gene expression of a large number of genes. It changes chromatin structure by altering DNA-histone contacts within a nucleosome, leading eventually to a change in nucleosome position, thus facilitating or repressing binding of gene-specific transcription factors. The sequence is that of SWI/SNF and RSC complexes subunit arp42 (arp42) from Schizosaccharomyces pombe (strain 972 / ATCC 24843) (Fission yeast).